A 360-amino-acid polypeptide reads, in one-letter code: Histidinol-phosphate aminotransferase (360 aa).

Position 222 is an N6-(pyridoxal phosphate)lysine (Lys-222).

The protein belongs to the class-II pyridoxal-phosphate-dependent aminotransferase family. Histidinol-phosphate aminotransferase subfamily. As to quaternary structure, homodimer. It depends on pyridoxal 5'-phosphate as a cofactor.

It catalyses the reaction L-histidinol phosphate + 2-oxoglutarate = 3-(imidazol-4-yl)-2-oxopropyl phosphate + L-glutamate. The protein operates within amino-acid biosynthesis; L-histidine biosynthesis; L-histidine from 5-phospho-alpha-D-ribose 1-diphosphate: step 7/9. The chain is Histidinol-phosphate aminotransferase from Listeria innocua serovar 6a (strain ATCC BAA-680 / CLIP 11262).